A 167-amino-acid chain; its full sequence is Translationally-controlled tumor protein homolog (167 aa).

The region spanning 1–167 (MIIFTDVISG…WKHGVSEDKI (167 aa)) is the TCTP domain.

The protein belongs to the TCTP family.

The protein resides in the cytoplasm. Its subcellular location is the cytoskeleton. Involved in protein synthesis. Involved in microtubule stabilization. This Debaryomyces hansenii (strain ATCC 36239 / CBS 767 / BCRC 21394 / JCM 1990 / NBRC 0083 / IGC 2968) (Yeast) protein is Translationally-controlled tumor protein homolog.